A 187-amino-acid chain; its full sequence is Ribosome-recycling factor (187 aa).

It belongs to the RRF family.

The protein localises to the cytoplasm. Its function is as follows. Responsible for the release of ribosomes from messenger RNA at the termination of protein biosynthesis. May increase the efficiency of translation by recycling ribosomes from one round of translation to another. This is Ribosome-recycling factor from Ruegeria pomeroyi (strain ATCC 700808 / DSM 15171 / DSS-3) (Silicibacter pomeroyi).